The sequence spans 248 residues: 3-deoxy-manno-octulosonate cytidylyltransferase (248 aa).

The protein belongs to the KdsB family.

The protein resides in the cytoplasm. The enzyme catalyses 3-deoxy-alpha-D-manno-oct-2-ulosonate + CTP = CMP-3-deoxy-beta-D-manno-octulosonate + diphosphate. It functions in the pathway nucleotide-sugar biosynthesis; CMP-3-deoxy-D-manno-octulosonate biosynthesis; CMP-3-deoxy-D-manno-octulosonate from 3-deoxy-D-manno-octulosonate and CTP: step 1/1. The protein operates within bacterial outer membrane biogenesis; lipopolysaccharide biosynthesis. In terms of biological role, activates KDO (a required 8-carbon sugar) for incorporation into bacterial lipopolysaccharide in Gram-negative bacteria. This Chlorobium chlorochromatii (strain CaD3) protein is 3-deoxy-manno-octulosonate cytidylyltransferase.